The following is a 188-amino-acid chain: GMP synthase [glutamine-hydrolyzing] subunit A (188 aa).

The region spanning 1 to 188 (MIIIMDNGGQ…RNFAKICGEL (188 aa)) is the Glutamine amidotransferase type-1 domain. Cys78 functions as the Nucleophile in the catalytic mechanism. Residues His165 and Glu167 contribute to the active site.

In terms of assembly, heterodimer composed of a glutamine amidotransferase subunit (A) and a GMP-binding subunit (B).

It carries out the reaction XMP + L-glutamine + ATP + H2O = GMP + L-glutamate + AMP + diphosphate + 2 H(+). The protein operates within purine metabolism; GMP biosynthesis; GMP from XMP (L-Gln route): step 1/1. Catalyzes the synthesis of GMP from XMP. This is GMP synthase [glutamine-hydrolyzing] subunit A from Pyrococcus furiosus (strain ATCC 43587 / DSM 3638 / JCM 8422 / Vc1).